A 171-amino-acid chain; its full sequence is Anthrone oxygenase dmxR16 (171 aa).

A run of 3 helical transmembrane segments spans residues 21 to 41, 67 to 87, and 96 to 116; these read VIAA…ISMI, GHII…FSAL, and YALA…FMTP. Asn-118 and Asn-129 each carry an N-linked (GlcNAc...) asparagine glycan. Residues 145-165 traverse the membrane as a helical segment; sequence WLHATRSMFPLIGAILGFTGI.

Belongs to the anthrone oxygenase family.

The protein localises to the membrane. The catalysed reaction is emodin anthrone + O2 = emodin + H2O + H(+). Its pathway is secondary metabolite biosynthesis. Functionally, anthrone oxygenase; part of the gene cluster that mediates the biosynthesis of the dimeric xanthones cryptosporioptides. The pathway begins with the synthesis of atrochrysone thioester by the polyketide synthase dmx-nrPKS. The atrochrysone carboxyl ACP thioesterase dmxR1 then breaks the thioester bond and releases the atrochrysone carboxylic acid from dmx-nrPKS. Atrochrysone carboxylic acid is decarboxylated by the decarboxylase dmxR15, and oxidized by the anthrone oxygenase dmxR16 to yield emodin. Emodin is then reduced to emodin hydroquinone by the oxidoreductase dmxR7. A-ring reduction by the short chain dehydrogenase dmxR18, dehydration by the scytalone dehydratase-like protein dmxR17 and probable spontaneous re-oxidation, results in overall deoxygenation to chrysophanol. Baeyer-Villiger oxidation by the Baeyer-Villiger monooxygenase (BVMO) dmxR6 then yields monodictylactone in equilibrium with monodictyphenone. In the case of the cryptosporioptides biosynthesis, monodictylactone is reduced at C-12 to an alcohol (by the short chain dehydrogenases dmxR12 or dmxR8) and hydroxylated at C-5 by dmxR9, yielding the electron-rich aromatic which could eliminate H(2)O to form the ortho-quinonemethide, followed by tautomerisation to paraquinone and complete the formal reduction to produce the 10-methylgroup. Conjugate addition of C-4a-OH to the resulting paraquinone by the monooxygenase dmxR10 then gives cyclohexadienone, which is then reduced at C-5 by the short chain dehydrogenase dmxR3 to give the dihydroxanthone. The 6,7-epoxide in the cryptosporioptides could be introduced by the cytochrome P450 monooxygenase dmxL3. The highly reducing PKS dmxL2 manufactures butyrate, which is further carboxylated by dmxL1 to form ethylmalonate. It is not yet clear whether the carboxylation occurs while the butyrate is attached to the ACP of dmxL2, but this unusual fungal metabolite could then be esterified to O-5 by the O-acetyltransferase dmxR13. Finally, dimerization performed by dmxR5 gives the observed dimers cryptosporioptides A, B and C as the final products of the pathway. The protein is Anthrone oxygenase dmxR16 of Cryptosporiopsis sp. (strain 8999).